The chain runs to 121 residues: D-ornithine 4,5-aminomutase subunit alpha (121 aa).

In terms of assembly, heterotetramer of 2 alpha (OraS) and 2 beta (OraE) subunits.

It carries out the reaction D-ornithine = (2R,4S)-2,4-diaminopentanoate. Increased activity in the presence of dithiothreitol (DTT) in vitro. Inhibited by 1 mM potassium phosphate and potassium chloride. Inhibited by L-alpha-ornithine, D,L-alpha-lysine, L-beta-lysine (50%-60%), L-alpha-lysine (26%) and by delta-amino-n-valeric acid to a lesser extent. Significant decrease in activity is observed in the presence of 0.2 mM p-chloromercuribenzoate, N-ethylmaleimide and also by 2 mM iodoacetate to a lesser extent but not inhibited by arsenite. Functionally, component of a complex that catalyzes the reversible migration of the omega amino group of D-ornithine to C-4 to form (2R,4S)-2,4-diaminopentanoic acid. The role of OraS remains obscure; however, it seems to be required for a correct folding of the OraE subunit. The complex is active only on D-ornithine and 2,4-diaminopentanoic acid and not active on L-ornithine, L-beta-lysine, L-alpha-lysine or D-alpha-lysine. This chain is D-ornithine 4,5-aminomutase subunit alpha (oraS), found in Acetoanaerobium sticklandii (strain ATCC 12662 / DSM 519 / JCM 1433 / CCUG 9281 / NCIMB 10654 / HF) (Clostridium sticklandii).